The following is a 350-amino-acid chain: Biotin synthase (350 aa).

The Radical SAM core domain occupies 38 to 256; sequence NYVQVSTLLS…IAVARIMMPE (219 aa). Residues C53, C57, and C60 each coordinate [4Fe-4S] cluster. The [2Fe-2S] cluster site is built by C97, C128, C188, and R260.

The protein belongs to the radical SAM superfamily. Biotin synthase family. In terms of assembly, homodimer. It depends on [4Fe-4S] cluster as a cofactor. [2Fe-2S] cluster serves as cofactor.

The catalysed reaction is (4R,5S)-dethiobiotin + (sulfur carrier)-SH + 2 reduced [2Fe-2S]-[ferredoxin] + 2 S-adenosyl-L-methionine = (sulfur carrier)-H + biotin + 2 5'-deoxyadenosine + 2 L-methionine + 2 oxidized [2Fe-2S]-[ferredoxin]. Its pathway is cofactor biosynthesis; biotin biosynthesis; biotin from 7,8-diaminononanoate: step 2/2. Catalyzes the conversion of dethiobiotin (DTB) to biotin by the insertion of a sulfur atom into dethiobiotin via a radical-based mechanism. In Aliivibrio salmonicida (strain LFI1238) (Vibrio salmonicida (strain LFI1238)), this protein is Biotin synthase.